The following is a 123-amino-acid chain: UPF0738 protein Bcer98_0913 (123 aa).

This sequence belongs to the UPF0738 family.

This Bacillus cytotoxicus (strain DSM 22905 / CIP 110041 / 391-98 / NVH 391-98) protein is UPF0738 protein Bcer98_0913.